A 219-amino-acid polypeptide reads, in one-letter code: Proteasome subunit beta type-9 (219 aa).

A propeptide spans 1 to 20 (removed in mature form); that stretch reads MLQAGAPTAGSFRTGEVHTG. The active-site Nucleophile is the T21. An N6-acetyllysine mark is found at K53 and K109.

Belongs to the peptidase T1B family. In terms of assembly, the 26S proteasome consists of a 20S proteasome core and two 19S regulatory subunits. The 20S proteasome core is composed of 28 subunits that are arranged in four stacked rings, resulting in a barrel-shaped structure. The two end rings are each formed by seven alpha subunits, and the two central rings are each formed by seven beta subunits. The catalytic chamber with the active sites is on the inside of the barrel. Component of the immunoproteasome, where it displaces the equivalent housekeeping subunit PSMB6. Component of the spermatoproteasome, a form of the proteasome specifically found in testis. Interacts with NCOA2 and NCOA3. Post-translationally, autocleaved. The resulting N-terminal Thr residue of the mature subunit is responsible for the nucleophile proteolytic activity. In terms of tissue distribution, detected in the cytoplasmic lobe of elongated spermatids, in residual bodies, and in the acrosomal cap of round spermatids.

It localises to the cytoplasm. Its subcellular location is the nucleus. It catalyses the reaction Cleavage of peptide bonds with very broad specificity.. The proteasome is a multicatalytic proteinase complex which is characterized by its ability to cleave peptides with Arg, Phe, Tyr, Leu, and Glu adjacent to the leaving group at neutral or slightly basic pH. The proteasome has an ATP-dependent proteolytic activity. This subunit is involved in antigen processing to generate class I binding peptides. This chain is Proteasome subunit beta type-9 (Psmb9), found in Rattus norvegicus (Rat).